Reading from the N-terminus, the 214-residue chain is NKG2-D type II integral membrane protein (214 aa).

Topologically, residues 1 to 56 (MGWIRDRRSPSSMEIRELHNRDVINRGAFKSRQKRTQTLITSKCGENPSPFFLARS) are cytoplasmic. Residues 57 to 77 (IAIAMGIRFIVMVMIYSGMII) form a helical; Signal-anchor for type II membrane protein membrane-spanning segment. Residues 78 to 214 (NLLFNQEAPS…NTYICMKRTV (137 aa)) lie on the Extracellular side of the membrane. Cystine bridges form between Cys94/Cys103 and Cys97/Cys108. The C-type lectin domain maps to 98-210 (PKNWICYRNS…CLTLNTYICM (113 aa)). Residues Asn113, Asn129, Asn161, and Asn184 are each glycosylated (N-linked (GlcNAc...) asparagine). Intrachain disulfides connect Cys125–Cys209 and Cys187–Cys201.

In terms of assembly, homodimer; disulfide-linked. Heterohexamer composed of two subunits of KLRK1 and four subunits of HCST/DAP10. Interacts (via transmembrane domain) with HCST/DAP10 (via transmembrane domain); the interaction is required for KLRK1 NK cell surface and induces NK cell-mediated cytotoxicity. Can form disulfide-bonded heterodimer with CD94. Interacts with CEACAM1; recruits PTPN6 that dephosphorylates VAV1. In terms of tissue distribution, detected in peripheral blood leukocytes, macrophages, monocytes and natural killer cells.

Its subcellular location is the cell membrane. In terms of biological role, functions as an activating and costimulatory receptor involved in immunosurveillance upon binding to various cellular stress-inducible ligands displayed at the surface of autologous tumor cells and virus-infected cells. Provides both stimulatory and costimulatory innate immune responses on activated killer (NK) cells, leading to cytotoxic activity. Acts as a costimulatory receptor for T-cell receptor (TCR) in CD8(+) T-cell-mediated adaptive immune responses by amplifying T-cell activation. Stimulates perforin-mediated elimination of ligand-expressing tumor cells. Signaling involves calcium influx, culminating in the expression of TNF-alpha. Participates in NK cell-mediated bone marrow graft rejection. May play a regulatory role in differentiation and survival of NK cells. Binds to ligands belonging to various subfamilies of MHC class I-related glycoproteins. This chain is NKG2-D type II integral membrane protein (KLRK1), found in Sus scrofa (Pig).